The chain runs to 156 residues: ATP synthase subunit b (156 aa).

Residues 7-27 (LFAQMIVFFVLWWVVARFVWP) form a helical membrane-spanning segment.

The protein belongs to the ATPase B chain family. As to quaternary structure, F-type ATPases have 2 components, F(1) - the catalytic core - and F(0) - the membrane proton channel. F(1) has five subunits: alpha(3), beta(3), gamma(1), delta(1), epsilon(1). F(0) has three main subunits: a(1), b(2) and c(10-14). The alpha and beta chains form an alternating ring which encloses part of the gamma chain. F(1) is attached to F(0) by a central stalk formed by the gamma and epsilon chains, while a peripheral stalk is formed by the delta and b chains.

It localises to the cell inner membrane. In terms of biological role, f(1)F(0) ATP synthase produces ATP from ADP in the presence of a proton or sodium gradient. F-type ATPases consist of two structural domains, F(1) containing the extramembraneous catalytic core and F(0) containing the membrane proton channel, linked together by a central stalk and a peripheral stalk. During catalysis, ATP synthesis in the catalytic domain of F(1) is coupled via a rotary mechanism of the central stalk subunits to proton translocation. Functionally, component of the F(0) channel, it forms part of the peripheral stalk, linking F(1) to F(0). This chain is ATP synthase subunit b, found in Polynucleobacter necessarius subsp. necessarius (strain STIR1).